Consider the following 921-residue polypeptide: GPI ethanolamine phosphate transferase 1 (921 aa).

Residues 1 to 9 (MKNNTRFTL) lie on the Cytoplasmic side of the membrane. The chain crosses the membrane as a helical span at residues 10 to 30 (IVVGVLFHLLYLWSIFDIYFI). Over 31-457 (SPLVHGMEQK…TTYNWRFIRT (427 aa)) the chain is Lumenal. N-linked (GlcNAc...) asparagine glycans are attached at residues Asn-90, Asn-138, Asn-198, Asn-262, and Asn-286. Residues 458–478 (IVTFGFLGWICYSFMIFLKLF) form a helical membrane-spanning segment. Residues 479–488 (ILNNSQTTHP) lie on the Cytoplasmic side of the membrane. Residues 489–509 (SILNISIFTSLGLILNYILFY) form a helical membrane-spanning segment. Topologically, residues 510–516 (QKSPLNF) are lumenal. Residues 517–537 (YLYLIFPLFFWSKIFSNTAII) form a helical membrane-spanning segment. The Cytoplasmic segment spans residues 538–552 (RDGVNEFFKGISKAE). A helical transmembrane segment spans residues 553–573 (SVIIGLTIISIYEGIVYGFFH). Over 574–575 (RW) the chain is Lumenal. Residues 576 to 596 (ILSLILVSFAFYPLVCGVTDL) traverse the membrane as a helical segment. Over 597-599 (FTN) the chain is Cytoplasmic. Residues 600-620 (LLWILTSVGLSSFTLLDAVKI) form a helical membrane-spanning segment. Position 621 (Glu-621) is a topological domain, lumenal. A helical transmembrane segment spans residues 622–642 (NLQQIQVAGILIVLSSAYAVM). At 643–654 (RLSQDISKYTQH) the chain is on the cytoplasmic side. The chain crosses the membrane as a helical span at residues 655 to 675 (LLSIQIFLVSGMLHFTSKSVI). Residues 676–684 (SLQKREGLP) lie on the Lumenal side of the membrane. The helical transmembrane segment at 685–705 (AFAQVGGWAILVISLTIMPFL) threads the bilayer. Over 706 to 728 (HYLKPNNNYQVRLLTIYLTFAPS) the chain is Cytoplasmic. Residues 729 to 749 (FIILSISFEALFYFIFTAYIV) form a helical membrane-spanning segment. The Lumenal segment spans residues 750–777 (QWLQIEKNIKVLKDEQKSDSNGIQLLRV). Residues 778–798 (AIIGFFLQQIAFFGTGNVASI) form a helical membrane-spanning segment. At 799 to 819 (SSFSLDSVYRLLPVFDPFPMG) the chain is on the cytoplasmic side. The chain crosses the membrane as a helical span at residues 820-840 (ALLMLKLIIPYVLLSCGLGIM). The Lumenal segment spans residues 841 to 849 (NIQLDIKDY). A helical transmembrane segment spans residues 850–870 (TISSLIISTSDILSLNFFYLL). Topologically, residues 871 to 878 (KTEGSWLD) are cytoplasmic. The helical transmembrane segment at 879–899 (IGVTISNYCLAILSSLFMLIL) threads the bilayer. Topologically, residues 900–921 (EIVGHQLLKNVTRATSSQKKTN) are lumenal. N-linked (GlcNAc...) asparagine glycosylation is present at Asn-909.

It belongs to the PIGG/PIGN/PIGO family. PIGN subfamily.

The protein resides in the endoplasmic reticulum membrane. Its pathway is glycolipid biosynthesis; glycosylphosphatidylinositol-anchor biosynthesis. Functionally, ethanolamine phosphate transferase involved in glycosylphosphatidylinositol-anchor biosynthesis. Transfers ethanolamine phosphate to the first alpha-1,4-linked mannose of the glycosylphosphatidylinositol precursor of GPI-anchor. The protein is GPI ethanolamine phosphate transferase 1 (MCD4) of Candida glabrata (strain ATCC 2001 / BCRC 20586 / JCM 3761 / NBRC 0622 / NRRL Y-65 / CBS 138) (Yeast).